A 593-amino-acid polypeptide reads, in one-letter code: AT-rich interactive domain-containing protein 3A (593 aa).

Positions 14–222 (QQRARQELEA…PQLQPPDHGD (209 aa)) are disordered. Residues 41–53 (AAPDEDREPESAR) show a composition bias toward basic and acidic residues. Over residues 54-87 (MQRAQMAALAAMRAAAAGLGHPASPGGSEDGPPG) the composition is skewed to low complexity. Ser-77, Ser-81, and Ser-88 each carry phosphoserine. Thr-98 carries the phosphothreonine modification. Phosphoserine occurs at positions 101 and 119. Over residues 104–127 (RGREGPGEEHFEDMASDEDMKPKW) the composition is skewed to basic and acidic residues. The interval 119–156 (SDEDMKPKWEEEEMEEDLGEDEEEEEEDYEDEEEEEDE) is acidic. A compositionally biased stretch (acidic residues) spans 128–158 (EEEEMEEDLGEDEEEEEEDYEDEEEEEDEEG). The region spanning 238-330 (DPKRKEFLDD…YLYPYECEKR (93 aa)) is the ARID domain. Phosphoserine is present on residues Ser-353 and Ser-362. Residues Lys-398, Lys-399, Lys-452, and Lys-462 each participate in a glycyl lysine isopeptide (Lys-Gly) (interchain with G-Cter in SUMO2) cross-link. In terms of domain architecture, REKLES spans 444 to 541 (AALEQLREKL…GVLFAQPPAP (98 aa)). The tract at residues 445–488 (ALEQLREKLESAEPPEKKMALVADEQQRLMQRALQQNFLAMAAQ) is important for nuclear localization. Residues 490–513 (PMSIRINSQASESRQDSAVNLTGT) are homodimerization. Disordered regions lie at residues 497–516 (SQAS…TNGS) and 539–593 (PAPT…NSLP). The important for cytoplasmic localization stretch occupies residues 537–557 (QPPAPTPTSAPNKGGGGGGGS). The segment covering 549-576 (KGGGGGGGSSSNAGGRGGNTGTSGGQAG) has biased composition (gly residues). Positions 580–593 (LSTPSTSTSNNSLP) are enriched in low complexity.

Homodimer. Heterodimer with ARID3B. Interacts with E2F1. Interacts with GTF2I and BTK. In terms of tissue distribution, widely expressed, with highest expression in skeletal muscle, thalamus, and colon.

Its subcellular location is the nucleus. The protein localises to the cytoplasm. Functionally, transcription factor which may be involved in the control of cell cycle progression by the RB1/E2F1 pathway and in B-cell differentiation. The sequence is that of AT-rich interactive domain-containing protein 3A (ARID3A) from Homo sapiens (Human).